The primary structure comprises 1138 residues: Envelopment polyprotein (1138 aa).

The signal sequence occupies residues 1 to 18 (MEGWYLVVLGVCYTLTLA). At 19-487 (MPKTIYELKM…CVPGLHGWAT (469 aa)) the chain is on the lumenal side. Intrachain disulfides connect C30–C155, C64–C161, C113–C132, C137–C142, C179–C189, C214–C250, C239–C354, C379–C438, C383–C392, C408–C427, and C455–C478. The N-linked (GlcNAc...) asparagine; by host glycan is linked to N138. N-linked (GlcNAc...) asparagine; by host glycosylation is present at N350. N402 carries an N-linked (GlcNAc...) asparagine; by host glycan. A helical membrane pass occupies residues 488–508 (VMLLSTFCFGWVLIPAVTLII). The Cytoplasmic segment spans residues 509–630 (LKCLRVLTFS…LGVFRYKSRC (122 aa)). Residues 519 to 536 (CSHYTNESKFKFILEKVK) are binding to the ribonucleoprotein. 2 CCHC-type zinc fingers span residues 548-568 (CDVC…RQSC) and 573-594 (CPYC…YSIC). Binding to the ribonucleoprotein regions lie at residues 591-608 (YSIC…KKSL), 595-606 (KLTGRFQEALKK), and 614-628 (KKGC…RYKS). The interaction with host TRAF3 stretch occupies residues 610 to 637 (KPEVKKGCYRTLGVFRYKSRCYVGLVWC). The ITAM domain occupies 614-637 (KKGCYRTLGVFRYKSRCYVGLVWC). A phosphotyrosine mark is found at Y618 and Y631. Positions 618 to 621 (YRTL) match the YxxL motif. Residues 631 to 651 (YVGLVWCLLLTCEIVIWAASA) traverse the membrane as a helical segment. The Lumenal portion of the chain corresponds to 652-1107 (ETPLMESGWS…EWLLGILNGN (456 aa)). 8 cysteine pairs are disulfide-bonded: C738/C773, C742/C780, C754/C887, C768/C898, C783/C906, C809/C818, C826/C835, and C866/C870. The tract at residues 760-780 (YQYETGWGCNPGDCPGVGTGC) is fusion loop. N930 carries N-linked (GlcNAc...) asparagine; by host glycosylation. 5 disulfide bridges follow: C972-C1002, C995-C1047, C1012-C1017, C1048-C1053, and C1087-C1091. A helical transmembrane segment spans residues 1108 to 1128 (WIVVVVLVVILILSIIMFSVL). The binding to the ribonucleoprotein stretch occupies residues 1124-1138 (MFSVLCPRRGHKKTV). The Cytoplasmic portion of the chain corresponds to 1129–1138 (CPRRGHKKTV).

Belongs to the hantavirus envelope glycoprotein family. In terms of assembly, homodimer. Homotetramer; forms heterotetrameric Gn-Gc spikes in the pre-fusion conformation. Interacts (via C-terminus) with the nucleoprotein. Interacts with host TUFM; this interaction contributes to the virus-induced degradation of mitochondria by autophagy, which leads to degradation of host MAVS and inhibition of type I interferon (IFN) responses. Interacts with host MAP1LC3B; this interaction contributes to the virus-induced degradation of mitochondria by autophagy, which leads to degradation of host MAVS and inhibition of type I interferon (IFN) responses. Interacts (via C-terminus) with host TRAF3; this interaction inhibits the formation of TRAF3-TBK1 complexes. Homodimer. Homotetramer; forms heterotetrameric Gn-Gc spikes in the pre-fusion conformation. Homotrimer; forms homotrimer in the post-fusion conformation at acidic pH. Interacts (via C-terminus) with the nucleoprotein. Envelope polyprotein precursor is quickly cleaved in vivo just after synthesis, presumably by host signal peptidase.

It localises to the virion membrane. Its subcellular location is the host cell surface. The protein resides in the host Golgi apparatus membrane. The protein localises to the host endoplasmic reticulum membrane. It is found in the host mitochondrion. Forms homotetramers with glycoprotein C at the surface of the virion. Attaches the virion to host cell receptors including integrin ITGAV/ITGB3. This attachment induces virion internalization possibly through clathrin-dependent endocytosis and dynamin-independent macropinocytosis. Mediates the assembly and budding of infectious virus particles through its interaction with the nucleocapsid protein and the viral genome. May dysregulate normal immune and endothelial cell responses through an ITAM motif. Translocates to mitochondria, binds to host TUFM and recruits MAP1LC3B. These interactions induce mitochondrial autophagy and therefore destruction of host MAVS leading to inhibition of type I interferon (IFN) responses. Concomitant breakdown of glycoprotein N is apparently prevented by the nucleoprotein that may inhibit Gn-stimulated autophagosome-lysosome fusion. Interacts with the viral genomic RNA. Inhibits the host RIG-I/TBK1 pathway by disrupting the formation of TBK1-TRAF3 complexes and downstream signaling responses required for IFN-beta transcription. Its function is as follows. Forms homotetramers with glycoprotein N at the surface of the virion. Attaches the virion to host cell receptors including integrin ITGAV/ITGB3. This attachment induces virion internalization predominantly through clathrin-dependent endocytosis. Class II fusion protein that promotes fusion of viral membrane with host endosomal membrane after endocytosis of the virion. This is Envelopment polyprotein (GP) from Abrothrix longipilis (Long-haired grass mouse).